The sequence spans 382 residues: Mannitol-1-phosphate 5-dehydrogenase (382 aa).

3–14 serves as a coordination point for NAD(+); that stretch reads ALHFGAGNIGRG. Lysine 269 bears the N6-acetyllysine mark.

This sequence belongs to the mannitol dehydrogenase family.

The enzyme catalyses D-mannitol 1-phosphate + NAD(+) = beta-D-fructose 6-phosphate + NADH + H(+). This chain is Mannitol-1-phosphate 5-dehydrogenase, found in Escherichia coli O7:K1 (strain IAI39 / ExPEC).